A 381-amino-acid chain; its full sequence is Actin-binding Rho-activating protein (381 aa).

Disordered regions lie at residues glutamate 39–serine 156 and glutamine 179–aspartate 207. Positions proline 69–proline 79 are enriched in polar residues. Positions lysine 97–serine 110 are enriched in basic and acidic residues. Serine 156 and serine 188 each carry phosphoserine. Over residues glutamine 179–serine 188 the composition is skewed to basic and acidic residues. 2 actin-binding regions span residues glutamate 199 to alanine 299 and lysine 300 to lysine 381. Interaction with actin stretches follow at residues serine 240–glycine 285 and methionine 352–lysine 381.

In terms of assembly, binds F-actin and ABLIM1, ABLIM2 and ABLIM3. Interaction with ABLIM2 and ABLIM3 enhances activity.

The protein localises to the cytoplasm. It is found in the myofibril. It localises to the sarcomere. The protein resides in the cytoskeleton. Its function is as follows. Acts as an activator of serum response factor (SRF)-dependent transcription possibly by inducing nuclear translocation of MKL1 or MKL2 and through a mechanism requiring Rho-actin signaling. This is Actin-binding Rho-activating protein from Homo sapiens (Human).